The sequence spans 116 residues: Large ribosomal subunit protein uL23 (116 aa).

The protein belongs to the universal ribosomal protein uL23 family. As to quaternary structure, part of the 50S ribosomal subunit. Contacts protein L29, and trigger factor when it is bound to the ribosome.

In terms of biological role, one of the early assembly proteins it binds 23S rRNA. One of the proteins that surrounds the polypeptide exit tunnel on the outside of the ribosome. Forms the main docking site for trigger factor binding to the ribosome. The polypeptide is Large ribosomal subunit protein uL23 (Psychrobacter arcticus (strain DSM 17307 / VKM B-2377 / 273-4)).